We begin with the raw amino-acid sequence, 418 residues long: Histidine--tRNA ligase (418 aa).

It belongs to the class-II aminoacyl-tRNA synthetase family. Homodimer.

It is found in the cytoplasm. It carries out the reaction tRNA(His) + L-histidine + ATP = L-histidyl-tRNA(His) + AMP + diphosphate + H(+). The polypeptide is Histidine--tRNA ligase (Dehalococcoides mccartyi (strain ATCC BAA-2266 / KCTC 15142 / 195) (Dehalococcoides ethenogenes (strain 195))).